Consider the following 674-residue polypeptide: Transcription activator of gluconeogenesis PMAA_028970 (674 aa).

The disordered stretch occupies residues 1–46 (MMDTDKDDLPSATDHSEHESGDAVKVEGGASKTASNSKDPSRPRRK). Residues 14–25 (DHSEHESGDAVK) are compositionally biased toward basic and acidic residues. Residues 52 to 80 (CFACQRAHLTCGDERPCQRCIKRGLQDAC) constitute a DNA-binding region (zn(2)-C6 fungal-type). Disordered stretches follow at residues 117–181 (ISPT…ATPA), 250–321 (TGAG…SGLY), 344–374 (IGSN…SPMK), and 519–557 (NLNV…PGPN). Residues 120–148 (TEYTQNGTNNAQQQQQKSGTIYASSTPSY) are compositionally biased toward polar residues. A compositionally biased stretch (low complexity) spans 149–163 (NNNNGTFDTNNATNT). 2 stretches are compositionally biased toward polar residues: residues 269-278 (GQRSNSQQFG) and 285-294 (TTESPSQQSF). Low complexity-rich tracts occupy residues 348–366 (TFAS…IAPS) and 529–540 (NTSSQSDSTSSS).

Belongs to the ERT1/acuK family.

The protein resides in the nucleus. In terms of biological role, transcription factor which regulates nonfermentable carbon utilization. Activator of gluconeogenetic genes. The protein is Transcription activator of gluconeogenesis PMAA_028970 of Talaromyces marneffei (strain ATCC 18224 / CBS 334.59 / QM 7333) (Penicillium marneffei).